Here is a 434-residue protein sequence, read N- to C-terminus: (3,5-dihydroxyphenyl)acetyl-CoA 1,2-dioxygenase (434 aa).

Residues Asp184, Glu190, 223 to 226 (HPRY), 234 to 239 (AGINLK), Gly293, 322 to 324 (IPG), and Gln413 each bind substrate.

This sequence belongs to the enoyl-CoA hydratase/isomerase family. Homohexamer; dimer of trimers.

It carries out the reaction (3,5-dihydroxyphenyl)acetyl-CoA + O2 = 2-(3,5-dihydroxyphenyl)-2-oxoacetate + CoA + H(+). Functionally, involved in the biosynthesis of the nonproteinogenic amino acid monomer (S)-3,5-dihydroxyphenylglycine (Dpg) responsible of the production of vancomycin and teicoplanin antibiotics. Catalyzes the unusual conversion 3,5-dihydroxyphenylacetyl-CoA (DPA-CoA) to 3,5-dihydroxyphenylglyoxylate. DpgC performed a net four-electron oxidation of the benzylic carbon of DPA-CoA and the hydrolysis of the thioester bond to generate free CoA. It can also use phenylacetyl-CoA (PA-CoA) as substrate. The sequence is that of (3,5-dihydroxyphenyl)acetyl-CoA 1,2-dioxygenase (dpgC) from Amycolatopsis orientalis (Nocardia orientalis).